The primary structure comprises 280 residues: Manganese transport system membrane protein MntC (280 aa).

The next 9 helical transmembrane spans lie at 16–36, 41–61, 62–82, 92–112, 137–157, 168–188, 193–213, 221–241, and 244–264; these read ALIT…FIIL, LMGD…YMMG, MNFF…IGFV, TAIG…ISFA, TIII…EFLV, YGLN…LVTV, TVGI…AYLL, IVLA…FSYI, and LASG…AFLF.

This sequence belongs to the ABC-3 integral membrane protein family.

The protein localises to the cell membrane. This protein is probably a component of a manganese permease, a binding protein-dependent, ATP-driven transport system. The sequence is that of Manganese transport system membrane protein MntC (mntC) from Listeria monocytogenes serovar 1/2a (strain ATCC BAA-679 / EGD-e).